The primary structure comprises 262 residues: ATP synthase subunit a (262 aa).

Helical transmembrane passes span 26 to 46 (VHIDTLFFSILAAVIFLFVFS), 86 to 106 (VAPLALTIFCWVFIMNAIDLI), 130 to 150 (DISATLGMSICVFFLILFYTI), 204 to 226 (LIFILIAVMYSANMAIAALGIPL), and 240 to 260 (LQAFIFMMLTVVYLSIAYNKA).

This sequence belongs to the ATPase A chain family. F-type ATPases have 2 components, CF(1) - the catalytic core - and CF(0) - the membrane proton channel. CF(1) has five subunits: alpha(3), beta(3), gamma(1), delta(1), epsilon(1). CF(0) has three main subunits: a(1), b(2) and c(9-12). The alpha and beta chains form an alternating ring which encloses part of the gamma chain. CF(1) is attached to CF(0) by a central stalk formed by the gamma and epsilon chains, while a peripheral stalk is formed by the delta and b chains.

It localises to the cell inner membrane. Functionally, key component of the proton channel; it plays a direct role in the translocation of protons across the membrane. This is ATP synthase subunit a from Haemophilus influenzae (strain PittEE).